Consider the following 566-residue polypeptide: 2-isopropylmalate synthase (566 aa).

Residues 32 to 306 (PLWCAVDLRD…DPQIDFSNID (275 aa)) form the Pyruvate carboxyltransferase domain. Mg(2+) contacts are provided by D41, H245, H247, and N281. The interval 451-566 (PVRPLERIKQ…VVSAINRASR (116 aa)) is regulatory domain.

It belongs to the alpha-IPM synthase/homocitrate synthase family. LeuA type 2 subfamily. As to quaternary structure, homodimer. It depends on Mg(2+) as a cofactor.

The protein localises to the cytoplasm. The enzyme catalyses 3-methyl-2-oxobutanoate + acetyl-CoA + H2O = (2S)-2-isopropylmalate + CoA + H(+). Its pathway is amino-acid biosynthesis; L-leucine biosynthesis; L-leucine from 3-methyl-2-oxobutanoate: step 1/4. Functionally, catalyzes the condensation of the acetyl group of acetyl-CoA with 3-methyl-2-oxobutanoate (2-ketoisovalerate) to form 3-carboxy-3-hydroxy-4-methylpentanoate (2-isopropylmalate). This Mycobacterium ulcerans (strain Agy99) protein is 2-isopropylmalate synthase.